The primary structure comprises 147 residues: Nucleoside diphosphate kinase (147 aa).

Residues K9, F57, R85, T91, R102, and N112 each coordinate ATP. Catalysis depends on H115, which acts as the Pros-phosphohistidine intermediate.

This sequence belongs to the NDK family. As to quaternary structure, homotetramer. It depends on Mg(2+) as a cofactor.

The protein localises to the cytoplasm. The enzyme catalyses a 2'-deoxyribonucleoside 5'-diphosphate + ATP = a 2'-deoxyribonucleoside 5'-triphosphate + ADP. It catalyses the reaction a ribonucleoside 5'-diphosphate + ATP = a ribonucleoside 5'-triphosphate + ADP. In terms of biological role, major role in the synthesis of nucleoside triphosphates other than ATP. The ATP gamma phosphate is transferred to the NDP beta phosphate via a ping-pong mechanism, using a phosphorylated active-site intermediate. The polypeptide is Nucleoside diphosphate kinase (Listeria monocytogenes serotype 4b (strain CLIP80459)).